A 276-amino-acid chain; its full sequence is NH(3)-dependent NAD(+) synthetase (276 aa).

Residue 46–53 (GISGGQDS) coordinates ATP. Mg(2+) is bound at residue Asp52. Arg140 contacts deamido-NAD(+). Thr160 is an ATP binding site. Glu165 is a Mg(2+) binding site. Residues Lys173 and Asp180 each contribute to the deamido-NAD(+) site. Residues Lys189 and Thr211 each contribute to the ATP site. 260 to 261 (HK) serves as a coordination point for deamido-NAD(+).

This sequence belongs to the NAD synthetase family. As to quaternary structure, homodimer.

The catalysed reaction is deamido-NAD(+) + NH4(+) + ATP = AMP + diphosphate + NAD(+) + H(+). It functions in the pathway cofactor biosynthesis; NAD(+) biosynthesis; NAD(+) from deamido-NAD(+) (ammonia route): step 1/1. Functionally, catalyzes the ATP-dependent amidation of deamido-NAD to form NAD. Uses ammonia as a nitrogen source. The polypeptide is NH(3)-dependent NAD(+) synthetase (Citrobacter koseri (strain ATCC BAA-895 / CDC 4225-83 / SGSC4696)).